Reading from the N-terminus, the 156-residue chain is 6,7-dimethyl-8-ribityllumazine synthase (156 aa).

Residues Phe-22, Ala-57–Glu-59, and Thr-81–Ile-83 each bind 5-amino-6-(D-ribitylamino)uracil. Gly-86–Thr-87 contributes to the (2S)-2-hydroxy-3-oxobutyl phosphate binding site. His-89 acts as the Proton donor in catalysis. Residue Phe-114 participates in 5-amino-6-(D-ribitylamino)uracil binding. Position 128 (Arg-128) interacts with (2S)-2-hydroxy-3-oxobutyl phosphate.

This sequence belongs to the DMRL synthase family. Forms an icosahedral capsid composed of 60 subunits, arranged as a dodecamer of pentamers.

It carries out the reaction (2S)-2-hydroxy-3-oxobutyl phosphate + 5-amino-6-(D-ribitylamino)uracil = 6,7-dimethyl-8-(1-D-ribityl)lumazine + phosphate + 2 H2O + H(+). Its pathway is cofactor biosynthesis; riboflavin biosynthesis; riboflavin from 2-hydroxy-3-oxobutyl phosphate and 5-amino-6-(D-ribitylamino)uracil: step 1/2. Its function is as follows. Catalyzes the formation of 6,7-dimethyl-8-ribityllumazine by condensation of 5-amino-6-(D-ribitylamino)uracil with 3,4-dihydroxy-2-butanone 4-phosphate. This is the penultimate step in the biosynthesis of riboflavin. The chain is 6,7-dimethyl-8-ribityllumazine synthase from Escherichia coli O45:K1 (strain S88 / ExPEC).